Consider the following 257-residue polypeptide: uncharacterized protein (257 aa).

Residues S122 and H236 each act as charge relay system in the active site.

The protein belongs to the peptidase S9B family.

This is an uncharacterized protein from Bacillus subtilis (strain 168).